We begin with the raw amino-acid sequence, 647 residues long: 1-deoxy-D-xylulose-5-phosphate synthase (647 aa).

Thiamine diphosphate-binding positions include histidine 74 and 115-117 (GHS). Aspartate 146 contacts Mg(2+). Thiamine diphosphate-binding positions include 147-148 (GA), asparagine 175, tyrosine 286, and glutamate 367. A Mg(2+)-binding site is contributed by asparagine 175.

Belongs to the transketolase family. DXPS subfamily. Homodimer. Mg(2+) serves as cofactor. Thiamine diphosphate is required as a cofactor.

It catalyses the reaction D-glyceraldehyde 3-phosphate + pyruvate + H(+) = 1-deoxy-D-xylulose 5-phosphate + CO2. It participates in metabolic intermediate biosynthesis; 1-deoxy-D-xylulose 5-phosphate biosynthesis; 1-deoxy-D-xylulose 5-phosphate from D-glyceraldehyde 3-phosphate and pyruvate: step 1/1. Its function is as follows. Catalyzes the acyloin condensation reaction between C atoms 2 and 3 of pyruvate and glyceraldehyde 3-phosphate to yield 1-deoxy-D-xylulose-5-phosphate (DXP). The protein is 1-deoxy-D-xylulose-5-phosphate synthase of Heliobacterium modesticaldum (strain ATCC 51547 / Ice1).